We begin with the raw amino-acid sequence, 238 residues long: Survival of motor neuron-related-splicing factor 30 (238 aa).

The Tudor domain occupies 72 to 132; it reads SWKVGDKCMA…KPVEEGRKAK (61 aa). The Nuclear localization signal motif lies at 142–160; that stretch reads KKEMIAQQREYKKKKALKK. Ser-201 is subject to Phosphoserine. N6-acetyllysine is present on Lys-219.

It belongs to the SMN family. In terms of assembly, associates with spliceosomes. Associates with U4/U5/U6 tri-snRNP and with U2 snRNP.

It is found in the nucleus speckle. The protein resides in the nucleus. It localises to the cajal body. In terms of biological role, involved in spliceosome assembly. The protein is Survival of motor neuron-related-splicing factor 30 (Smndc1) of Rattus norvegicus (Rat).